The following is a 710-amino-acid chain: MRYIVSPQLVLQVGKGQEVERALYLTPYDYIDEKSPIYYFLRSHLNIQRPEIVKRHILLTLRMTQLKGYLGNLLDIKDDIIIYSHKNNLEYSYVDNTIFNPFVYTQKKTLLKNDSFLYNVYSGACDFLVIWVARACDTSIPEFGSYEDVDNNIIKFETMLMEVFPQLDLDITVESKFNNIFRTNLKLTGLKKIIQRVQDLDINYKSLLSRYDEHFINMTGNHFILNDEQLNLSIWDLDSTLALSSDGDTVMINNVKLFTDLVSDIDTQMERIKGDITYKVHLATPINSRIKLDIETSFIFIETATNNILLSSDKKISIILAKNHISIKVKNHIPNIEKYFTFLVIAINAMFNSVQKSSDFTKVETVYWSRICQNTKNKNRKPIIINYLDPGMKKISNNFYRSDEKEVFINDNGIMFTCIDPLGKYNKVGFLNIFHDMRKYCIPCCFLHDQSHRSTFSSCVHQIDVEKKIVSPYILNFGKVVTESKMSFLPIIFDAFLNDGMTANMEQDNKRLKETSGYHIVRCCAGDDIVRLRTISDIIQFVNEDKNILIVNDMIYFPMNATDIGKKIHILIQEIVHEVMIVKKKESSDKIDFFPPNYKLLKDLFPKQTIQTPIHSDAGMVLTTDGFYIDGKLFNEDLSSKYVTFTKNVIASDAVTKYFSPLFKYVISEAKDRFIKTWMINIMIHMNVDPNNIIPTLEKYYPNSGRAQIN.

This sequence belongs to the poxviridae VETF large subunit family. In terms of assembly, heterodimer of a 70 kDa and a 82 kDa subunit. Part of the early transcription complex composed of ETF, RAP94/OPG109, and the DNA-directed RNA polymerase.

It localises to the virion. Its function is as follows. Acts with RNA polymerase to initiate transcription from early gene promoters. Is recruited by the RPO-associated protein of 94 kDa RAP94/OPG109 to form the early transcription complex, which also contains the core RNA polymerase. ETF heterodimer binds to early gene promoters. The sequence is that of Early transcription factor 82 kDa subunit (OPG133) from Monkeypox virus.